The following is a 248-amino-acid chain: Pulmonary surfactant-associated protein A2 (248 aa).

The signal sequence occupies residues 1 to 20; it reads MWLCPLALTLILMAASGAAC. The Collagen-like domain maps to 28–100; sequence GSPGIPGTPG…AGERGPPGLP (73 aa). 9 positions are modified to 4-hydroxyproline: Pro30, Pro33, Pro36, Pro42, Pro54, Pro57, Pro63, Pro67, and Pro70. A disordered region spans residues 33–101; that stretch reads PGTPGSHGLP…GERGPPGLPA (69 aa). Residues 42 to 51 show a composition bias toward basic and acidic residues; sequence PGRDGRDGVK. Residues 54-70 are compositionally biased toward pro residues; the sequence is PGPPGPMGPPGETPCPP. The span at 71 to 82 shows a compositional bias: low complexity; that stretch reads GNNGLPGAPGVP. Positions 84 to 93 are enriched in basic and acidic residues; sequence ERGEKGEAGE. One can recognise a C-type lectin domain in the interval 132-248; that stretch reads MTVGEKVFSS…LYSRLTICEF (117 aa). Intrachain disulfides connect Cys155–Cys246 and Cys224–Cys238. Asn207 is a glycosylation site (N-linked (GlcNAc...) asparagine).

Belongs to the SFTPA family. Oligomeric complex of 6 set of homotrimers. In terms of processing, N-acetylated.

The protein resides in the secreted. It is found in the extracellular space. Its subcellular location is the extracellular matrix. The protein localises to the surface film. Functionally, in presence of calcium ions, it binds to surfactant phospholipids and contributes to lower the surface tension at the air-liquid interface in the alveoli of the mammalian lung and is essential for normal respiration. The sequence is that of Pulmonary surfactant-associated protein A2 (SFTPA2) from Homo sapiens (Human).